The sequence spans 72 residues: Translation initiation factor IF-1 (72 aa).

In terms of domain architecture, S1-like spans 1–72 (MAKDDVIEID…DKGRITFRYK (72 aa)).

Belongs to the IF-1 family. As to quaternary structure, component of the 30S ribosomal translation pre-initiation complex which assembles on the 30S ribosome in the order IF-2 and IF-3, IF-1 and N-formylmethionyl-tRNA(fMet); mRNA recruitment can occur at any time during PIC assembly.

The protein resides in the cytoplasm. Its function is as follows. One of the essential components for the initiation of protein synthesis. Stabilizes the binding of IF-2 and IF-3 on the 30S subunit to which N-formylmethionyl-tRNA(fMet) subsequently binds. Helps modulate mRNA selection, yielding the 30S pre-initiation complex (PIC). Upon addition of the 50S ribosomal subunit IF-1, IF-2 and IF-3 are released leaving the mature 70S translation initiation complex. This is Translation initiation factor IF-1 from Campylobacter jejuni subsp. doylei (strain ATCC BAA-1458 / RM4099 / 269.97).